We begin with the raw amino-acid sequence, 707 residues long: Metal transporter CNNM3 (707 aa).

The chain crosses the membrane as a helical span at residues 11 to 27 (LGWLFAALCLGNAAGEA). The N-linked (GlcNAc...) asparagine glycan is linked to N73. The CNNM transmembrane domain maps to 130–308 (EAAPPWALGL…DPYSDLSKGV (179 aa)). Transmembrane regions (helical) follow at residues 193 to 213 (CALGALLLLASLAQAALAVLL), 221 to 241 (AVPAVLGSAGLVFLVGEVVPA), and 261 to 281 (LAVLLTLPVALPVGQLLELAA). CBS domains follow at residues 318-379 (LTPL…CTPL) and 386-452 (YNHP…ILDE). Phosphoserine is present on S661. A compositionally biased stretch (polar residues) spans 678–691 (LGEKTTTAAGSSHS). Positions 678–707 (LGEKTTTAAGSSHSRPGVPVEGSPGRNPGV) are disordered. S700 is subject to Phosphoserine.

This sequence belongs to the ACDP family. Widely expressed. Expressed at higher level in heart and spleen.

It is found in the cell membrane. In terms of biological role, probable metal transporter. This is Metal transporter CNNM3 (CNNM3) from Homo sapiens (Human).